A 334-amino-acid chain; its full sequence is Putative carboxypeptidase VC_A0337 (334 aa).

The active-site Nucleophile is Ser-112. Active-site charge relay system residues include Glu-234 and His-302.

It belongs to the peptidase S66 family.

The chain is Putative carboxypeptidase VC_A0337 from Vibrio cholerae serotype O1 (strain ATCC 39315 / El Tor Inaba N16961).